Here is a 268-residue protein sequence, read N- to C-terminus: Putative ABC transporter ATP-binding protein MK0182 (268 aa).

One can recognise an ABC transporter domain in the interval 1 to 229 (MTHEYPDGTC…VDLIRESGLK (229 aa)). Residue 29–36 (GPNGSGKT) coordinates ATP.

It belongs to the ABC transporter superfamily.

It is found in the cell membrane. Probably part of an ABC transporter complex. Responsible for energy coupling to the transport system. The protein is Putative ABC transporter ATP-binding protein MK0182 of Methanopyrus kandleri (strain AV19 / DSM 6324 / JCM 9639 / NBRC 100938).